Here is a 345-residue protein sequence, read N- to C-terminus: Uroporphyrinogen decarboxylase (345 aa).

Substrate is bound by residues 23 to 27 (RQAGR), D73, Y149, T203, and H319.

It belongs to the uroporphyrinogen decarboxylase family. Homodimer.

It localises to the cytoplasm. It carries out the reaction uroporphyrinogen III + 4 H(+) = coproporphyrinogen III + 4 CO2. It participates in porphyrin-containing compound metabolism; protoporphyrin-IX biosynthesis; coproporphyrinogen-III from 5-aminolevulinate: step 4/4. Catalyzes the decarboxylation of four acetate groups of uroporphyrinogen-III to yield coproporphyrinogen-III. In Vesicomyosocius okutanii subsp. Calyptogena okutanii (strain HA), this protein is Uroporphyrinogen decarboxylase.